The chain runs to 284 residues: Bifunctional protein FolD (284 aa).

NADP(+) contacts are provided by residues 166-168 and I232; that span reads GAS.

This sequence belongs to the tetrahydrofolate dehydrogenase/cyclohydrolase family. As to quaternary structure, homodimer.

The catalysed reaction is (6R)-5,10-methylene-5,6,7,8-tetrahydrofolate + NADP(+) = (6R)-5,10-methenyltetrahydrofolate + NADPH. It catalyses the reaction (6R)-5,10-methenyltetrahydrofolate + H2O = (6R)-10-formyltetrahydrofolate + H(+). Its pathway is one-carbon metabolism; tetrahydrofolate interconversion. Catalyzes the oxidation of 5,10-methylenetetrahydrofolate to 5,10-methenyltetrahydrofolate and then the hydrolysis of 5,10-methenyltetrahydrofolate to 10-formyltetrahydrofolate. The protein is Bifunctional protein FolD of Pseudomonas fluorescens (strain ATCC BAA-477 / NRRL B-23932 / Pf-5).